The following is a 412-amino-acid chain: Thyroxine-binding globulin (412 aa).

Residues 1–16 (MPLFLYMVLLVLGIHC) form the signal peptide. Residues N20, N35, N98, N164, and N252 are each glycosylated (N-linked (GlcNAc...) asparagine). 2 residues coordinate thyroxine: N292 and K395.

This sequence belongs to the serpin family. As to expression, expressed by the liver and secreted in plasma.

It is found in the secreted. Its function is as follows. Major thyroid hormone transport protein in serum. The protein is Thyroxine-binding globulin (SERPINA7) of Sus scrofa (Pig).